The chain runs to 831 residues: Protein translocase subunit SecA (831 aa).

ATP is bound by residues Gln-88, 106–110 (GEGKT), and Asp-495. Positions 816, 818, 827, and 828 each coordinate Zn(2+).

The protein belongs to the SecA family. Monomer and homodimer. Part of the essential Sec protein translocation apparatus which comprises SecA, SecYEG and auxiliary proteins SecDF-YajC and YidC. Zn(2+) is required as a cofactor.

It localises to the cell membrane. Its subcellular location is the cytoplasm. The enzyme catalyses ATP + H2O + cellular proteinSide 1 = ADP + phosphate + cellular proteinSide 2.. Functionally, part of the Sec protein translocase complex. Interacts with the SecYEG preprotein conducting channel. Has a central role in coupling the hydrolysis of ATP to the transfer of proteins into and across the cell membrane, serving as an ATP-driven molecular motor driving the stepwise translocation of polypeptide chains across the membrane. In Lawsonia intracellularis (strain PHE/MN1-00), this protein is Protein translocase subunit SecA.